A 701-amino-acid chain; its full sequence is Ribosomal RNA large subunit methyltransferase K/L (701 aa).

A THUMP domain is found at 43–154 (LLYQSLMWSR…KETAHISLDL (112 aa)).

The protein belongs to the methyltransferase superfamily. RlmKL family.

It is found in the cytoplasm. The catalysed reaction is guanosine(2445) in 23S rRNA + S-adenosyl-L-methionine = N(2)-methylguanosine(2445) in 23S rRNA + S-adenosyl-L-homocysteine + H(+). It carries out the reaction guanosine(2069) in 23S rRNA + S-adenosyl-L-methionine = N(2)-methylguanosine(2069) in 23S rRNA + S-adenosyl-L-homocysteine + H(+). In terms of biological role, specifically methylates the guanine in position 2445 (m2G2445) and the guanine in position 2069 (m7G2069) of 23S rRNA. This chain is Ribosomal RNA large subunit methyltransferase K/L, found in Klebsiella pneumoniae subsp. pneumoniae (strain ATCC 700721 / MGH 78578).